The following is a 297-amino-acid chain: Probable endonuclease 4 (297 aa).

Residues His69, His110, Glu145, Asp179, His182, His214, Asp227, His229, and Glu259 each coordinate Zn(2+).

The protein belongs to the AP endonuclease 2 family. It depends on Zn(2+) as a cofactor.

The catalysed reaction is Endonucleolytic cleavage to 5'-phosphooligonucleotide end-products.. Its function is as follows. Endonuclease IV plays a role in DNA repair. It cleaves phosphodiester bonds at apurinic or apyrimidinic (AP) sites, generating a 3'-hydroxyl group and a 5'-terminal sugar phosphate. This chain is Probable endonuclease 4, found in Listeria monocytogenes serovar 1/2a (strain ATCC BAA-679 / EGD-e).